A 363-amino-acid chain; its full sequence is tRNA dimethylallyltransferase (363 aa).

Residues 1–55 (MLACNDDTSLYLLVKQVTKKEIYSNDLENGNVKRGASMQSLYLIGDPKCCRNNSS) are unknown insert. 65-72 (GPTASGKS) contacts ATP. Substrate is bound at residue 67-72 (TASGKS). Interaction with substrate tRNA stretches follow at residues 90–93 (DSMQ) and 214–218 (QRLIR).

The protein belongs to the IPP transferase family. Monomer. Mg(2+) serves as cofactor.

The enzyme catalyses adenosine(37) in tRNA + dimethylallyl diphosphate = N(6)-dimethylallyladenosine(37) in tRNA + diphosphate. Catalyzes the transfer of a dimethylallyl group onto the adenine at position 37 in tRNAs that read codons beginning with uridine, leading to the formation of N6-(dimethylallyl)adenosine (i(6)A). The sequence is that of tRNA dimethylallyltransferase from Rickettsia conorii (strain ATCC VR-613 / Malish 7).